The primary structure comprises 402 residues: Heat stress transcription factor A-6a (402 aa).

Residues 1-28 (MLKPQTPRARRAAHPNSHMASSSSSSSL) are disordered. Positions 212–258 (EVVSLKRDRAALRAEVIMLKQQYNACKSQLIAMEEMVRNIERRQQQT) form a coiled coil. Residues 216 to 266 (LKRDRAALRAEVIMLKQQYNACKSQLIAMEEMVRNIERRQQQTIGFFAKVL) form a hydrophobic repeat HR-A/B region. A Nuclear localization signal motif is present at residues 290 to 293 (KRQR). The AHA signature appears at 349–358 (DDVWEELDAL).

The protein belongs to the HSF family. Class A subfamily. In terms of assembly, homotrimer. Exhibits temperature-dependent phosphorylation.

The protein localises to the nucleus. Its function is as follows. Transcriptional regulator that specifically binds DNA of heat shock promoter elements (HSE). This Oryza sativa subsp. japonica (Rice) protein is Heat stress transcription factor A-6a (HSFA6B).